A 275-amino-acid chain; its full sequence is Adenosylcobinamide-GDP ribazoletransferase (275 aa).

Helical transmembrane passes span 52-72 (VVGV…GVLG), 73-93 (VTPL…NRMM), 126-146 (MGFS…AALV), 181-201 (FGAM…LVAL), 208-228 (VAVW…GIIA), and 251-271 (IGAG…VAVA).

Belongs to the CobS family. Requires Mg(2+) as cofactor.

It is found in the cell membrane. It catalyses the reaction alpha-ribazole + adenosylcob(III)inamide-GDP = adenosylcob(III)alamin + GMP + H(+). The enzyme catalyses alpha-ribazole 5'-phosphate + adenosylcob(III)inamide-GDP = adenosylcob(III)alamin 5'-phosphate + GMP + H(+). Its pathway is cofactor biosynthesis; adenosylcobalamin biosynthesis; adenosylcobalamin from cob(II)yrinate a,c-diamide: step 7/7. Functionally, joins adenosylcobinamide-GDP and alpha-ribazole to generate adenosylcobalamin (Ado-cobalamin). Also synthesizes adenosylcobalamin 5'-phosphate from adenosylcobinamide-GDP and alpha-ribazole 5'-phosphate. This Corynebacterium efficiens (strain DSM 44549 / YS-314 / AJ 12310 / JCM 11189 / NBRC 100395) protein is Adenosylcobinamide-GDP ribazoletransferase.